Reading from the N-terminus, the 449-residue chain is Exodeoxyribonuclease 7 large subunit (449 aa).

This sequence belongs to the XseA family. As to quaternary structure, heterooligomer composed of large and small subunits.

The protein localises to the cytoplasm. It catalyses the reaction Exonucleolytic cleavage in either 5'- to 3'- or 3'- to 5'-direction to yield nucleoside 5'-phosphates.. Bidirectionally degrades single-stranded DNA into large acid-insoluble oligonucleotides, which are then degraded further into small acid-soluble oligonucleotides. The polypeptide is Exodeoxyribonuclease 7 large subunit (Aliivibrio fischeri (strain ATCC 700601 / ES114) (Vibrio fischeri)).